Consider the following 436-residue polypeptide: Glutamate-1-semialdehyde 2,1-aminomutase (436 aa).

Lys276 bears the N6-(pyridoxal phosphate)lysine mark.

It belongs to the class-III pyridoxal-phosphate-dependent aminotransferase family. HemL subfamily. In terms of assembly, homodimer. It depends on pyridoxal 5'-phosphate as a cofactor.

Its subcellular location is the cytoplasm. It carries out the reaction (S)-4-amino-5-oxopentanoate = 5-aminolevulinate. It functions in the pathway porphyrin-containing compound metabolism; protoporphyrin-IX biosynthesis; 5-aminolevulinate from L-glutamyl-tRNA(Glu): step 2/2. It participates in porphyrin-containing compound metabolism; chlorophyll biosynthesis. The sequence is that of Glutamate-1-semialdehyde 2,1-aminomutase from Synechococcus sp. (strain JA-2-3B'a(2-13)) (Cyanobacteria bacterium Yellowstone B-Prime).